A 118-amino-acid chain; its full sequence is NAD(P)H-quinone oxidoreductase subunit M (118 aa).

It belongs to the complex I NdhM subunit family. As to quaternary structure, NDH-1 can be composed of about 15 different subunits; different subcomplexes with different compositions have been identified which probably have different functions.

The protein localises to the cellular thylakoid membrane. The catalysed reaction is a plastoquinone + NADH + (n+1) H(+)(in) = a plastoquinol + NAD(+) + n H(+)(out). It carries out the reaction a plastoquinone + NADPH + (n+1) H(+)(in) = a plastoquinol + NADP(+) + n H(+)(out). NDH-1 shuttles electrons from an unknown electron donor, via FMN and iron-sulfur (Fe-S) centers, to quinones in the respiratory and/or the photosynthetic chain. The immediate electron acceptor for the enzyme in this species is believed to be plastoquinone. Couples the redox reaction to proton translocation, and thus conserves the redox energy in a proton gradient. Cyanobacterial NDH-1 also plays a role in inorganic carbon-concentration. This chain is NAD(P)H-quinone oxidoreductase subunit M, found in Trichormus variabilis (strain ATCC 29413 / PCC 7937) (Anabaena variabilis).